The primary structure comprises 1627 residues: DNA topoisomerase 2-beta (1627 aa).

Residues Asn117, Asn146, 174–176, and 187–194 contribute to the ATP site; these read SSN and GRNGYGAK. Positions 368–370 are interaction with DNA; it reads KKK. 402–404 contributes to the ATP binding site; that stretch reads QTK. One can recognise a Toprim domain in the interval 481–598; that stretch reads CTLILTEGDS…SLLKHGFLEE (118 aa). Glu487, Asp567, and Asp569 together coordinate Mg(2+). A Topo IIA-type catalytic domain is found at 741 to 1194; the sequence is IPSLVDGLKP…SASDLWKEDL (454 aa). The O-(5'-phospho-DNA)-tyrosine intermediate role is filled by Tyr831. The interval 1016–1025 is interaction with DNA; it reads KLQTSLTCNS. Disordered regions lie at residues 1115-1144, 1224-1248, 1283-1365, and 1378-1627; these read AWKE…GSTS, KVGK…RRIV, EFGG…DSLL, and DFSK…DMFN. The segment covering 1131–1144 has biased composition (low complexity); the sequence is NANDDASSASGSTS. Positions 1296 to 1305 are enriched in polar residues; it reads TVNTAASGTK. The span at 1339–1349 shows a compositional bias: basic and acidic residues; the sequence is PWSDDESKSES. Composition is skewed to acidic residues over residues 1381 to 1392 and 1412 to 1428; these read KEEDDAHDDDDA and REDE…DEYD. Basic and acidic residues-rich tracts occupy residues 1436–1448 and 1462–1471; these read PSPE…KKNQ and KTDDDTTKLD. Basic residues-rich tracts occupy residues 1542–1552 and 1566–1578; these read GKGRGAKKRKT and KAPK…KSKK. The segment covering 1616–1627 has biased composition (acidic residues); the sequence is ESDEDDDFDMFN.

It belongs to the type II topoisomerase family. In terms of assembly, homodimer. Mg(2+) serves as cofactor. Mn(2+) is required as a cofactor. The cofactor is Ca(2+).

Its subcellular location is the nucleus. It is found in the nucleolus. It localises to the nucleoplasm. It catalyses the reaction ATP-dependent breakage, passage and rejoining of double-stranded DNA.. Key decatenating enzyme that alters DNA topology by binding to two double-stranded DNA molecules, generating a double-stranded break in one of the strands, passing the intact strand through the broken strand, and religating the broken strand. Plays a role in B-cell differentiation. The polypeptide is DNA topoisomerase 2-beta (TOP2B) (Gallus gallus (Chicken)).